Here is a 293-residue protein sequence, read N- to C-terminus: MRQSTLHTRLSTGPGGSMRSSIEIFNIRTRKMRVVWQTPELFEAPNWSPDGKYLLLNSEGLLYRLSLAGDPSPEKVDTGFATICNNDHGISPDGALYAISDKVEFGKSAIYLLPSTGGTPRLMTKNLPSYWHGWSPDGKSFTYCGIRDQVFDIYSMDIDSGVETRLTHGEGRNDGPDYSPDGRWIYFNSSRTGQMQIWRVRVDGSSVERITDSAYGDWFPHPSPSGDKVVFVSYDADVFDHPRDLDVRVQLMDMDGGNVETLFDLFGGQGTMNSPNWSPDGDEFAYVRYFPVE.

The protein belongs to the TolB family.

This is an uncharacterized protein from Agrobacterium fabrum (strain C58 / ATCC 33970) (Agrobacterium tumefaciens (strain C58)).